The sequence spans 324 residues: Beta-ketoacyl-[acyl-carrier-protein] synthase III (324 aa).

Active-site residues include cysteine 116 and histidine 251. Residues 252-256 (QANLR) form an ACP-binding region. Asparagine 281 is a catalytic residue.

The protein belongs to the thiolase-like superfamily. FabH family. Homodimer.

It is found in the cytoplasm. The enzyme catalyses malonyl-[ACP] + acetyl-CoA + H(+) = 3-oxobutanoyl-[ACP] + CO2 + CoA. It functions in the pathway lipid metabolism; fatty acid biosynthesis. Catalyzes the condensation reaction of fatty acid synthesis by the addition to an acyl acceptor of two carbons from malonyl-ACP. Catalyzes the first condensation reaction which initiates fatty acid synthesis and may therefore play a role in governing the total rate of fatty acid production. Possesses both acetoacetyl-ACP synthase and acetyl transacylase activities. Its substrate specificity determines the biosynthesis of branched-chain and/or straight-chain of fatty acids. This is Beta-ketoacyl-[acyl-carrier-protein] synthase III from Xylella fastidiosa (strain Temecula1 / ATCC 700964).